The following is a 115-amino-acid chain: MNPLIQSLTEGQLRTDIPSFRPGDTVRVHAKVVEGNRERIQIFEGVVIARKGAGISENYTVRKISNGIGVERIFPIHTPRVEKIEVVRYGKVRRAKLYYLRALQGKAARIKEIRR.

Belongs to the bacterial ribosomal protein bL19 family.

This protein is located at the 30S-50S ribosomal subunit interface and may play a role in the structure and function of the aminoacyl-tRNA binding site. In Streptococcus pneumoniae serotype 2 (strain D39 / NCTC 7466), this protein is Large ribosomal subunit protein bL19.